Consider the following 366-residue polypeptide: Rab9 effector protein with kelch motifs (366 aa).

Kelch repeat units follow at residues 49–95 (KILI…FISA), 100–146 (NIWV…TSSA), 151–200 (KLYV…VLTA), 204–253 (KLFV…AWKS), 254–303 (YIYI…LLPW), and 343–366 (LCFIFGGMDTDGELHSDCCVTILQ).

Rab9 effector required for endosome to trans-Golgi network (TGN) transport. The protein is Rab9 effector protein with kelch motifs (rabepk) of Xenopus laevis (African clawed frog).